Consider the following 307-residue polypeptide: Small ribosomal subunit biogenesis GTPase RsgA (307 aa).

The 166-residue stretch at 64–229 (KNSLIRPSIA…IADTPGFSSL (166 aa)) folds into the CP-type G domain. GTP-binding positions include 113-116 (SKLD) and 172-180 (GQTGAGKTT). Residues cysteine 253, cysteine 258, histidine 260, and cysteine 266 each contribute to the Zn(2+) site.

This sequence belongs to the TRAFAC class YlqF/YawG GTPase family. RsgA subfamily. As to quaternary structure, monomer. Associates with 30S ribosomal subunit, binds 16S rRNA. Zn(2+) serves as cofactor.

It localises to the cytoplasm. In terms of biological role, one of several proteins that assist in the late maturation steps of the functional core of the 30S ribosomal subunit. Helps release RbfA from mature subunits. May play a role in the assembly of ribosomal proteins into the subunit. Circularly permuted GTPase that catalyzes slow GTP hydrolysis, GTPase activity is stimulated by the 30S ribosomal subunit. The chain is Small ribosomal subunit biogenesis GTPase RsgA from Lactococcus lactis subsp. lactis (strain IL1403) (Streptococcus lactis).